Consider the following 799-residue polypeptide: 1-phosphatidylinositol 4,5-bisphosphate phosphodiesterase delta-4 (799 aa).

In terms of domain architecture, PH spans L16–D124. The tract at residues K26 to A53 is substrate binding. EF-hand domains are found at residues R134–E169, M170–R205, and A206–E237. D147, N149, D151, K153, E158, D183, S185, S187, T189, and E194 together coordinate Ca(2+). A GBA motif is present at residues E213 to E243. The 146-residue stretch at Q290–K435 folds into the PI-PLC X-box domain. Residue H305 is part of the active site. Residues N306, E335, and D337 each contribute to the Ca(2+) site. H350 is an active-site residue. E384 is a Ca(2+) binding site. The substrate site is built by K433 and K435. The residue at position 460 (S460) is a Phosphoserine. The PI-PLC Y-box domain occupies L530–R646. Substrate is bound by residues S559 and R586. One can recognise a C2 domain in the interval R646–S773. Ca(2+) is bound by residues I687, D689, N713, D742, Y743, and D744. The PDZ-binding motif lies at H768–L771.

Interacts with GRIP1. Interacts (via GBA motif) with guanine nucleotide-binding protein G(i) alpha subunit GNAI3 (inactive GDP-bound form); low-affinity interaction. It depends on Ca(2+) as a cofactor.

It is found in the membrane. Its subcellular location is the nucleus. The protein localises to the cytoplasm. The protein resides in the endoplasmic reticulum. The enzyme catalyses a 1,2-diacyl-sn-glycero-3-phospho-(1D-myo-inositol-4,5-bisphosphate) + H2O = 1D-myo-inositol 1,4,5-trisphosphate + a 1,2-diacyl-sn-glycerol + H(+). It carries out the reaction a 1,2-diacyl-sn-glycero-3-phospho-(1D-myo-inositol) + H2O = 1D-myo-inositol 1-phosphate + a 1,2-diacyl-sn-glycerol + H(+). In terms of biological role, hydrolyzes the phosphatidylinositol 4,5-bisphosphate (PIP2) to generate 2 second messenger molecules diacylglycerol (DAG) and inositol 1,4,5-trisphosphate (IP3). DAG mediates the activation of protein kinase C (PKC), while IP3 releases Ca(2+) from intracellular stores. Required for acrosome reaction in sperm during fertilization, probably by acting as an important enzyme for intracellular Ca(2+) mobilization in the zona pellucida-induced acrosome reaction. May play a role in cell growth. Modulates the liver regeneration in cooperation with nuclear PKC. Overexpression up-regulates the Erk signaling pathway and proliferation. This is 1-phosphatidylinositol 4,5-bisphosphate phosphodiesterase delta-4 (PLCD4) from Macaca fascicularis (Crab-eating macaque).